Consider the following 118-residue polypeptide: V-type proton ATPase subunit G 2 (118 aa).

The interval 23–91 (ADARKRKARR…QGMQSSQQRN (69 aa)) is disordered. Over residues 35–55 (QAKEEAQMEVEQYRREREQEF) the composition is skewed to basic and acidic residues. Composition is skewed to polar residues over residues 56–69 (QSKQ…QGNL) and 78–89 (RRQVQGMQSSQQ).

It belongs to the V-ATPase G subunit family. As to quaternary structure, V-ATPase is a heteromultimeric enzyme made up of two complexes: the ATP-hydrolytic V1 complex and the proton translocation V0 complex. The V1 complex consists of three catalytic AB heterodimers that form a heterohexamer, three peripheral stalks each consisting of EG heterodimers, one central rotor including subunits D and F, and the regulatory subunits C and H. The proton translocation complex V0 consists of the proton transport subunit a, a ring of proteolipid subunits c9c'', rotary subunit d, subunits e and f, and the accessory subunits ATP6AP1/Ac45 and ATP6AP2/PRR.

The protein localises to the melanosome. Its subcellular location is the cytoplasmic vesicle. It is found in the clathrin-coated vesicle membrane. Its function is as follows. Subunit of the V1 complex of vacuolar(H+)-ATPase (V-ATPase), a multisubunit enzyme composed of a peripheral complex (V1) that hydrolyzes ATP and a membrane integral complex (V0) that translocates protons. V-ATPase is responsible for acidifying and maintaining the pH of intracellular compartments and in some cell types, is targeted to the plasma membrane, where it is responsible for acidifying the extracellular environment. The polypeptide is V-type proton ATPase subunit G 2 (Atp6v1g2) (Mus musculus (Mouse)).